Here is a 1070-residue protein sequence, read N- to C-terminus: DNA-directed RNA polymerase subunit beta (1070 aa).

This sequence belongs to the RNA polymerase beta chain family. As to quaternary structure, in plastids the minimal PEP RNA polymerase catalytic core is composed of four subunits: alpha, beta, beta', and beta''. When a (nuclear-encoded) sigma factor is associated with the core the holoenzyme is formed, which can initiate transcription.

Its subcellular location is the plastid. The protein localises to the chloroplast. It carries out the reaction RNA(n) + a ribonucleoside 5'-triphosphate = RNA(n+1) + diphosphate. Functionally, DNA-dependent RNA polymerase catalyzes the transcription of DNA into RNA using the four ribonucleoside triphosphates as substrates. This is DNA-directed RNA polymerase subunit beta from Gossypium hirsutum (Upland cotton).